A 496-amino-acid polypeptide reads, in one-letter code: Lysine--tRNA ligase (496 aa).

2 residues coordinate Mg(2+): glutamate 409 and glutamate 416.

This sequence belongs to the class-II aminoacyl-tRNA synthetase family. As to quaternary structure, homodimer. Mg(2+) serves as cofactor.

The protein resides in the cytoplasm. The catalysed reaction is tRNA(Lys) + L-lysine + ATP = L-lysyl-tRNA(Lys) + AMP + diphosphate. The chain is Lysine--tRNA ligase from Streptococcus mutans serotype c (strain ATCC 700610 / UA159).